A 151-amino-acid chain; its full sequence is Aspartate carbamoyltransferase regulatory chain (151 aa).

Cys107, Cys112, Cys135, and Cys138 together coordinate Zn(2+).

It belongs to the PyrI family. Contains catalytic and regulatory chains. The cofactor is Zn(2+).

Functionally, involved in allosteric regulation of aspartate carbamoyltransferase. The chain is Aspartate carbamoyltransferase regulatory chain from Thermococcus gammatolerans (strain DSM 15229 / JCM 11827 / EJ3).